Reading from the N-terminus, the 329-residue chain is Delta-aminolevulinic acid dehydratase (329 aa).

Zn(2+)-binding residues include Cys122, Cys124, His131, and Cys132. Residue Lys199 is the Schiff-base intermediate with substrate of the active site. Lys199 bears the N6-succinyllysine mark. Arg209 is a binding site for 5-aminolevulinate. A Phosphoserine modification is found at Ser215. Arg221 contributes to the 5-aminolevulinate binding site. Cys223 contributes to the Zn(2+) binding site. Catalysis depends on Lys252, which acts as the Schiff-base intermediate with substrate. Lys252 is modified (N6-succinyllysine). The 5-aminolevulinate site is built by Ser279 and Tyr318.

The protein belongs to the ALAD family. Homooctamer; active form. Homohexamer; low activity form. Zn(2+) serves as cofactor.

The protein localises to the cytoplasm. It is found in the cytosol. It catalyses the reaction 2 5-aminolevulinate = porphobilinogen + 2 H2O + H(+). It participates in porphyrin-containing compound metabolism; protoporphyrin-IX biosynthesis; coproporphyrinogen-III from 5-aminolevulinate: step 1/4. Can alternate between a fully active homooctamer and a low-activity homohexamer. A bound magnesium ion may promote the assembly of the fully active homooctamer. The magnesium-binding site is absent in the low-activity homohexamer. Inhibited by compounds that favor the hexameric state. Inhibited by divalent lead ions. The lead ions partially displace the zinc cofactor. Functionally, catalyzes an early step in the biosynthesis of tetrapyrroles. Binds two molecules of 5-aminolevulinate per subunit, each at a distinct site, and catalyzes their condensation to form porphobilinogen. This Bos taurus (Bovine) protein is Delta-aminolevulinic acid dehydratase (ALAD).